The chain runs to 369 residues: Chorismate synthase (369 aa).

NADP(+)-binding residues include Arg48 and Arg54. FMN is bound by residues 125 to 127, 238 to 239, Gly278, 293 to 297, and Arg319; these read RSS, NA, and KPTSS.

The protein belongs to the chorismate synthase family. As to quaternary structure, homotetramer. Requires FMNH2 as cofactor.

The enzyme catalyses 5-O-(1-carboxyvinyl)-3-phosphoshikimate = chorismate + phosphate. Its pathway is metabolic intermediate biosynthesis; chorismate biosynthesis; chorismate from D-erythrose 4-phosphate and phosphoenolpyruvate: step 7/7. Functionally, catalyzes the anti-1,4-elimination of the C-3 phosphate and the C-6 proR hydrogen from 5-enolpyruvylshikimate-3-phosphate (EPSP) to yield chorismate, which is the branch point compound that serves as the starting substrate for the three terminal pathways of aromatic amino acid biosynthesis. This reaction introduces a second double bond into the aromatic ring system. The sequence is that of Chorismate synthase from Burkholderia pseudomallei (strain 1106a).